We begin with the raw amino-acid sequence, 120 residues long: Seripauperin-6 (120 aa).

An N-terminal signal peptide occupies residues 1–20 (MVKLTSIAAGVAAIAATASA).

It belongs to the SRP1/TIP1 family. Seripauperin subfamily.

This Saccharomyces cerevisiae (strain ATCC 204508 / S288c) (Baker's yeast) protein is Seripauperin-6 (PAU6).